The chain runs to 263 residues: tRNA1(Val) (adenine(37)-N6)-methyltransferase (263 aa).

It belongs to the methyltransferase superfamily. tRNA (adenine-N(6)-)-methyltransferase family.

The protein resides in the cytoplasm. The catalysed reaction is adenosine(37) in tRNA1(Val) + S-adenosyl-L-methionine = N(6)-methyladenosine(37) in tRNA1(Val) + S-adenosyl-L-homocysteine + H(+). Its function is as follows. Specifically methylates the adenine in position 37 of tRNA(1)(Val) (anticodon cmo5UAC). The protein is tRNA1(Val) (adenine(37)-N6)-methyltransferase of Pseudoalteromonas atlantica (strain T6c / ATCC BAA-1087).